Reading from the N-terminus, the 274-residue chain is MDVYGLIGNPVGHSLSPPMHEAGYGTLGIDARYVTFEPAPDDAVAAIGGAGALGVAGLNVTVPFKQDALDAVDPAPLAERIGAVNTVDFGPLRAGDADRPRGHNTDAAGVKRAFSHHDIELAGRDAVVVGAGGAGRAAAFALADAGATVHVANRTAERAVDLADAVPGATGGGLDDLGDRIAGADVLVNATSVGMDEPEATPVPADHLHGDLAVLDAVYAPIETRLLREAAAAGATTIDGAWMLLFQGVEAFEIWTGADAPVEAMNAALRAELE.

Shikimate is bound by residues 14–16 and Thr61; that span reads SLS. Lys65 (proton acceptor) is an active-site residue. Shikimate contacts are provided by Asn85 and Asp106. Residues 130-134, 153-158, and Ala217 contribute to the NADP(+) site; these read GAGGA and NRTAER. Shikimate is bound at residue Tyr219. Residue Gly240 participates in NADP(+) binding.

Belongs to the shikimate dehydrogenase family. In terms of assembly, homodimer.

It catalyses the reaction shikimate + NADP(+) = 3-dehydroshikimate + NADPH + H(+). It participates in metabolic intermediate biosynthesis; chorismate biosynthesis; chorismate from D-erythrose 4-phosphate and phosphoenolpyruvate: step 4/7. Its function is as follows. Involved in the biosynthesis of the chorismate, which leads to the biosynthesis of aromatic amino acids. Catalyzes the reversible NADPH linked reduction of 3-dehydroshikimate (DHSA) to yield shikimate (SA). This Halorubrum lacusprofundi (strain ATCC 49239 / DSM 5036 / JCM 8891 / ACAM 34) protein is Shikimate dehydrogenase (NADP(+)).